The primary structure comprises 170 residues: MQAYHLLLVCMYISCSAYTNASTAEDPNPNTYAEFSRMSHAAKDNGESNRALRTHNPDREERMMSLASLENWHAKLMGKTFEQVNSMFNKGKFNPPKGTTVGQATDWTWSKTIAFFEQMKKDNTTPESLKETLNIAQKEATMSAKALRKDPDYLMYNAFKTFWDNKSPGV.

The signal sequence occupies residues 1 to 17 (MQAYHLLLVCMYISCSA). Positions 50–62 (RALRTHNPDREER) match the RxLR-dEER motif.

This sequence belongs to the RxLR effector family.

The protein localises to the secreted. It localises to the host cytoplasm. It is found in the host nucleus. Effector that enhances P.infestans colonization of Nicotiana benthamiana leaves. The chain is RxLR effector protein PITG_07555 from Phytophthora infestans (strain T30-4) (Potato late blight agent).